The following is a 323-amino-acid chain: Flavone synthase cfoJ (323 aa).

It depends on FMN as a cofactor.

It functions in the pathway secondary metabolite biosynthesis; flavonoid biosynthesis. Functionally, FMN-dependent oxidoreductase; part of the gene cluster that mediates the biosynthesis of chlorflavonin, a fungal flavonoid with acetolactate synthase inhibitory activity. Within the pathway, cfoJ acts as a flavone synthase (FNS) and catalyzes the formation of a double bond between C2 and C3, converting the flavanone into a flavone. The pathway begins with the PKS-NRPS hybrid synthetase cfoA that uses benzoic acid or p-hydroxybenzoic acid as a starter unit with four rounds of chain elongation using malonyl-CoA to form the chalcone skeleton. Then, a new type of chalcone isomerase, cfoK, catalyzes the conversion of the chalcone into a flavanone by a histidine-mediated oxa-Michael addition mechanism. The desaturation of flavanone to flavone is catalyzed by a new type of flavone synthase, the flavin mononucleotide (FMN)-dependent oxidoreductase cfoJ. Monooxygenases cfoF, cfoG, and P450 cfoH are responsible for the hydroxylation of the flavonoid skeleton at sites C3, C8, and C2', respectively. Like cfoF, the dehydratase cfoI plays also a role in the hydroxylation of position C3. Methyltransferases cfoB, cfoC, and cfoD then catalyze the methylation of C7-OH, C8-OH, and C3-OH, respectively. Finally, the monooxygenase cfoE is responsible for the chlorination of flavonoid at position C3'. The sequence is that of Flavone synthase cfoJ from Aspergillus candidus.